A 364-amino-acid chain; its full sequence is Hepatitis A virus cellular receptor 1 (364 aa).

The N-terminal stretch at 1–20 (MHPQVVILSLILHLADSVAG) is a signal peptide. The 101-residue stretch at 21–121 (SVKVGGEAGP…WFNDMKITVS (101 aa)) folds into the Ig-like V-type domain. Residues 21-295 (SVKVGGEAGP…SLLTANTTKG (275 aa)) lie on the Extracellular side of the membrane. 3 disulfide bridges follow: C36–C105, C46–C57, and C52–C104. Residue N65 is glycosylated (N-linked (GlcNAc...) asparagine). 12 repeat units span residues 138-143 (VPTVTT), 144-149 (VRTSTT), 150-155 (VPTTTT), 156-160 (VPMTT), 161-165 (VPTTT), 166-171 (VPTTMS), 172-177 (IPTTTT), 178-183 (VLTTMT), 184-189 (VSTTTS), 190-195 (VPTTTS), 196-201 (IPTTTS), and 202-207 (VPVTTT). Residues 138-207 (VPTVTTVRTS…TTTSVPVTTT (70 aa)) form a 12 X 6 AA approximate tandem repeats of V-P-T-T-T-T] region. The segment at 216-257 (PLPRQNHEPVATSPSSPQPAETHPTTLQGAIRREPTSSPLYS) is disordered. The segment covering 227-243 (TSPSSPQPAETHPTTLQ) has biased composition (polar residues). Residues N263, N277, and N291 are each glycosylated (N-linked (GlcNAc...) asparagine). The chain crosses the membrane as a helical span at residues 296–316 (IYAGVCISVLVLLALLGVIIA). The Cytoplasmic portion of the chain corresponds to 317 to 364 (KKYFFKKEVQQLSVSFSSLQIKALQNAVEKEVQAEDNIYIENSLYATD). Residues K338 and K346 each participate in a glycyl lysine isopeptide (Lys-Gly) (interchain with G-Cter in ubiquitin) cross-link.

This sequence belongs to the immunoglobulin superfamily. TIM family. As to quaternary structure, interacts with STAM. Interacts with SELPLG. In terms of assembly, (Microbial infection) Interacts with hepatitis A virus capsid proteins. (Microbial infection) Interacts with Ebolavirus envelope glycoprotein GP. As to quaternary structure, (Microbial infection) Interacts with Zika virus envelope protein E. Post-translationally, ubiquitinated at two lysine residues Lys-338 and Lys-346 on its cytoplasmic domain. Ubiquitination promotes receptor endocytosis and target receptors for lysosomal degradation and termination of receptor signaling. In terms of processing, (Microbial infection) Ubiquitination is required for Dengue virus endocytosis. As to expression, widely expressed, with highest levels in kidney and testis. Expressed by activated CD4+ T-cells during the development of helper T-cells responses.

Its subcellular location is the cell membrane. Its function is as follows. Phosphatidylserine receptor that plays an important functional role in regulatory B-cells homeostasis including generation, expansion and suppressor functions. As P-selectin/SELPLG ligand, plays a specialized role in activated but not naive T-cell trafficking during inflammatory responses. Controls thereby T-cell accumulation in the inflamed central nervous system (CNS) and the induction of autoimmune disease. Also regulates expression of various anti-inflammatory cytokines and co-inhibitory ligands including IL10. Acts as a regulator of T-cell proliferation. May play a role in kidney injury and repair. In terms of biological role, (Microbial infection) Acts as a receptor for Hepatitis A virus. Functionally, (Microbial infection) Acts as a receptor for Ebolavirus and Marburg virus by binding exposed phosphatidyl-serine at the surface of virion membrane. Serves as a dual receptor for Ebolavirus by also interacting with envelope glycoprotein GP. (Microbial infection) Acts as a receptor for Dengue virus by binding exposed phosphatidyl-serine at the surface of virion membrane. TIM1 and Dengue virus are co-internalized during virus entry. Its function is as follows. (Microbial infection) Acts as a receptor for Zika virus by binding to envelope protein E. In terms of biological role, (Microbial infection) Plays a positive role in Chikungunya virus cell entry. This Homo sapiens (Human) protein is Hepatitis A virus cellular receptor 1 (HAVCR1).